The following is a 565-amino-acid chain: NAD-dependent malic enzyme (565 aa).

The active-site Proton donor is tyrosine 104. Arginine 157 serves as a coordination point for NAD(+). Lysine 175 functions as the Proton acceptor in the catalytic mechanism. Positions 246, 247, and 270 each coordinate a divalent metal cation. The NAD(+) site is built by aspartate 270 and asparagine 418.

Belongs to the malic enzymes family. Homotetramer. It depends on Mg(2+) as a cofactor. Mn(2+) serves as cofactor.

It catalyses the reaction (S)-malate + NAD(+) = pyruvate + CO2 + NADH. It carries out the reaction oxaloacetate + H(+) = pyruvate + CO2. This is NAD-dependent malic enzyme from Escherichia coli (strain SMS-3-5 / SECEC).